The chain runs to 213 residues: Uridine kinase (213 aa).

An ATP-binding site is contributed by 15-22 (GASASGKS).

It belongs to the uridine kinase family.

It is found in the cytoplasm. It catalyses the reaction uridine + ATP = UMP + ADP + H(+). The enzyme catalyses cytidine + ATP = CMP + ADP + H(+). The protein operates within pyrimidine metabolism; CTP biosynthesis via salvage pathway; CTP from cytidine: step 1/3. Its pathway is pyrimidine metabolism; UMP biosynthesis via salvage pathway; UMP from uridine: step 1/1. In Salmonella paratyphi A (strain ATCC 9150 / SARB42), this protein is Uridine kinase.